Consider the following 481-residue polypeptide: Mediator of RNA polymerase II transcription subunit 3 (481 aa).

Residues 79 to 107 (QEKFQMIRSKVLGLTERLQELSNDFEELQ) adopt a coiled-coil conformation. 2 disordered regions span residues 140-261 (AGAS…MGTP) and 415-463 (NTKG…KSAY). Low complexity predominate over residues 148–203 (TPTPAAATPTTAPTPGAGTKKAAKTAPTPTATATIGTPSNNAPTPATTATTPGTQA). Residues 204-213 (KKPRKPRQTK) are compositionally biased toward basic residues. Residues 214-248 (KQQQAAAAAAAVAQAQAQAQAQAQNQNQNNMQNKN) show a composition bias toward low complexity. Over residues 249–259 (ISNPGMNSNMG) the composition is skewed to polar residues. Low complexity predominate over residues 428-458 (MDQNQNQNQSQNQSQNQNQSMNMNMNNDSNN).

It belongs to the Mediator complex subunit 3 family. As to quaternary structure, component of the Mediator complex.

The protein resides in the nucleus. Functionally, component of the Mediator complex, a coactivator involved in regulated gene transcription of nearly all RNA polymerase II-dependent genes. Mediator functions as a bridge to convey information from gene-specific regulatory proteins to the basal RNA polymerase II transcription machinery. Mediator is recruited to promoters by direct interactions with regulatory proteins and serves as a scaffold for the assembly of a functional preinitiation complex with RNA polymerase II and the general transcription factors. The chain is Mediator of RNA polymerase II transcription subunit 3 (PGD1) from Candida glabrata (strain ATCC 2001 / BCRC 20586 / JCM 3761 / NBRC 0622 / NRRL Y-65 / CBS 138) (Yeast).